The primary structure comprises 324 residues: Chlorophyllase-1 (324 aa).

The GXSXG signature appears at 136-140 (GHSRG). Ser-138 (nucleophile) is an active-site residue. Active-site charge relay system residues include Asp-168 and His-243.

This sequence belongs to the AB hydrolase superfamily. Lipase family. Expressed in seedlings, leaves, flowers and siliques, but not in roots.

Its subcellular location is the cytoplasm. It is found in the cytosol. It carries out the reaction a chlorophyll + H2O = a chlorophyllide + phytol + H(+). The catalysed reaction is chlorophyll a + H2O = phytol + chlorophyllide a + H(+). The protein operates within porphyrin-containing compound metabolism; chlorophyll degradation. Catalyzes the hydrolysis of ester bond in chlorophyll to yield chlorophyllide and phytol. Shows a preferential activity toward chlorophyll a. Does not seem to be required for chlorophyll degradation during senescence. May modulate the balance between different plant defense pathways. In Arabidopsis thaliana (Mouse-ear cress), this protein is Chlorophyllase-1.